The chain runs to 428 residues: AP-1 complex subunit mu-1 (428 aa).

In terms of domain architecture, MHD spans 170–426 (KNEVFLDVIE…ITMAGEYELR (257 aa)).

This sequence belongs to the adaptor complexes medium subunit family. Adaptor protein complex 1 (AP-1) is a heterotetramer composed of two large adaptins (gamma-type subunit and beta-type subunit), a medium adaptin (mu-type subunit) and a small adaptin (sigma-type subunit).

The protein resides in the golgi apparatus. Its subcellular location is the cytoplasmic vesicle. The protein localises to the clathrin-coated vesicle membrane. Subunit of clathrin-associated adaptor protein complex 1 that plays a role in protein sorting at the trans-Golgi network and early endosomes (TGN/EE). The AP complexes mediate the recruitment of clathrin to membranes and the recognition of sorting signals within the cytosolic tails of transmembrane cargo molecules. Functions redundantly with AP1M2 in multiple post-Golgi trafficking pathways leading from the TGN to the vacuole, the plasma membrane, and the cell-division plane. This is AP-1 complex subunit mu-1 (AP1M1) from Arabidopsis thaliana (Mouse-ear cress).